The chain runs to 129 residues: Small ribosomal subunit protein uS9 (129 aa).

The protein belongs to the universal ribosomal protein uS9 family.

The sequence is that of Small ribosomal subunit protein uS9 from Chlorobium phaeovibrioides (strain DSM 265 / 1930) (Prosthecochloris vibrioformis (strain DSM 265)).